A 99-amino-acid chain; its full sequence is UPF0751 protein BAMEG_A0107 (99 aa).

It belongs to the UPF0751 family.

The protein is UPF0751 protein BAMEG_A0107 of Bacillus anthracis (strain CDC 684 / NRRL 3495).